The sequence spans 622 residues: Chaperone protein HscA homolog (622 aa).

Belongs to the heat shock protein 70 family.

Functionally, chaperone involved in the maturation of iron-sulfur cluster-containing proteins. Has a low intrinsic ATPase activity which is markedly stimulated by HscB. The sequence is that of Chaperone protein HscA homolog from Burkholderia cenocepacia (strain HI2424).